Here is a 351-residue protein sequence, read N- to C-terminus: Mitochondrial mRNA pseudouridine synthase RPUSD3 (351 aa).

Residues 1–25 constitute a mitochondrion transit peptide; that stretch reads MRAVLAREMDGRRVLGRFWSGWRRG. The segment at 33 to 58 is disordered; it reads EDAGFGTEARHQRQPRGSCQRSGPLG. Phosphoserine is present on Ser-71.

This sequence belongs to the pseudouridine synthase RluA family. Forms a regulatory protein-RNA complex, consisting of RCC1L, NGRN, RPUSD3, RPUSD4, TRUB2, FASTKD2 and 16S mt-rRNA.

It localises to the mitochondrion matrix. It carries out the reaction a uridine in mRNA = a pseudouridine in mRNA. Its function is as follows. Catalyzes uridine to pseudouridine isomerization (pseudouridylation) of specific mitochondrial mRNAs (mt-mRNAs), a post-transcriptional modification necessary for their translation. Acts at position 390 in COXI mt-mRNA and at position 697-699 in mitochondrial COXIII mt-mRNA. As a component of a functional protein-RNA module, consisting of RCC1L, NGRN, RPUSD3, RPUSD4, TRUB2, FASTKD2 and 16S mitochondrial ribosomal RNA (16S mt-rRNA), controls 16S mt-rRNA abundance and may play a role in mitochondrial ribosome biogenesis. In Homo sapiens (Human), this protein is Mitochondrial mRNA pseudouridine synthase RPUSD3.